We begin with the raw amino-acid sequence, 354 residues long: Thiamine thiazole synthase (354 aa).

Substrate is bound by residues Ala-83, 104–105 (EA), Gly-112, and Val-177. A 2,3-didehydroalanine (Cys) modification is found at Cys-210. Substrate contacts are provided by residues Asp-212, His-227, Met-305, and 315–317 (RMG).

This sequence belongs to the THI4 family. Homooctamer. Requires Fe cation as cofactor. In terms of processing, during the catalytic reaction, a sulfide is transferred from Cys-210 to a reaction intermediate, generating a dehydroalanine residue.

It localises to the cytoplasm. It is found in the nucleus. It catalyses the reaction [ADP-thiazole synthase]-L-cysteine + glycine + NAD(+) = [ADP-thiazole synthase]-dehydroalanine + ADP-5-ethyl-4-methylthiazole-2-carboxylate + nicotinamide + 3 H2O + 2 H(+). In terms of biological role, involved in biosynthesis of the thiamine precursor thiazole. Catalyzes the conversion of NAD and glycine to adenosine diphosphate 5-(2-hydroxyethyl)-4-methylthiazole-2-carboxylic acid (ADT), an adenylated thiazole intermediate. The reaction includes an iron-dependent sulfide transfer from a conserved cysteine residue of the protein to a thiazole intermediate. The enzyme can only undergo a single turnover, which suggests it is a suicide enzyme. May have additional roles in adaptation to various stress conditions and in DNA damage tolerance. The protein is Thiamine thiazole synthase of Candida albicans (strain SC5314 / ATCC MYA-2876) (Yeast).